The sequence spans 698 residues: Dynein regulatory complex protein 1 (698 aa).

Basic and acidic residues-rich tracts occupy residues 27 to 47 and 76 to 90; these read ALREGDHGGGKEGENKEEIGK and AGDDRENQHRIQEEQ. 2 disordered regions span residues 27–50 and 71–90; these read ALREGDHGGGKEGENKEEIGKGKQ and SSVRVAGDDRENQHRIQEEQ. Residues 183 to 367 are a coiled coil; sequence MSRQFVEVQN…DLQSKFRHFE (185 aa). The segment at 425–461 is disordered; the sequence is SGGGAAAAATGGAAGGAAAAGGVGPNGEEESEEDAAA. Residues 436-449 show a composition bias toward gly residues; it reads GAAGGAAAAGGVGP. Residues 655–685 are a coiled coil; the sequence is QERAGSLRDVESLQHQNNELRALLNQYLSSR.

Belongs to the DRC1 family. In terms of assembly, component of the nexin-dynein regulatory complex (N-DRC). Interacts with DRC4 and DRC5.

It localises to the cytoplasm. It is found in the cytoskeleton. The protein localises to the cilium axoneme. The protein resides in the flagellum axoneme. Functionally, component of the nexin-dynein regulatory complex (N-DRC) a key regulator of ciliary/flagellar motility which maintains the alignment and integrity of the distal axoneme and regulates microtubule sliding in motile axonemes. Plays a critical role in the assembly of N-DRC and also stabilizes the assembly of multiple inner dynein arms and radial spokes. Coassembles with DRC2 to form a central scaffold needed for assembly of the N-DRC and its attachment to the outer doublet microtubules. The protein is Dynein regulatory complex protein 1 (DRC1) of Chlamydomonas reinhardtii (Chlamydomonas smithii).